The primary structure comprises 667 residues: Homeobox protein 3 (667 aa).

4 disordered regions span residues 44–108, 179–232, 249–268, and 331–418; these read FFQP…NSSI, NNNN…TVYN, NNNN…VNNN, and STNK…YQKQ. Positions 52-63 are enriched in pro residues; it reads LPPPTNQQPQPQ. The span at 75-96 shows a compositional bias: polar residues; it reads CNSSFENSPQQPTSPLLISSQT. The span at 97-108 shows a compositional bias: low complexity; sequence SYPSDLSSNSSI. Positions 334–343 are enriched in basic residues; the sequence is KRMKISHHSH. Residues 344–379 show a composition bias toward low complexity; the sequence is SLSNNNENSLSQPYFNNNNNNNNENENVYNIVNEQN. A compositionally biased stretch (polar residues) spans 380-390; that stretch reads PTFNPNQSNTH. Residues 386-454 adopt a coiled-coil conformation; it reads QSNTHQQQEE…ENENVICSEF (69 aa). A DNA-binding region (homeobox) is located at residues 602–664; it reads EFKSRRILSE…NKRMRDKSNK (63 aa).

It is found in the nucleus. Functionally, putative transcription factor. This chain is Homeobox protein 3 (hbx3), found in Dictyostelium discoideum (Social amoeba).